A 273-amino-acid chain; its full sequence is Epidermal growth factor-like protein 7 (273 aa).

An N-terminal signal peptide occupies residues 1-23 (MRGSQEVLLMWLLVLAVGGTEHA). The EMI domain maps to 27 to 104 (GRRVCAVRAH…TSGLPGACGA (78 aa)). 9 disulfide bridges follow: cysteine 31-cysteine 89, cysteine 56-cysteine 62, cysteine 88-cysteine 102, cysteine 107-cysteine 117, cysteine 111-cysteine 123, cysteine 125-cysteine 134, cysteine 141-cysteine 152, cysteine 148-cysteine 161, and cysteine 163-cysteine 176. The region spanning 103–135 (GAAICQPPCRNGGSCVQPGRCRCPAGWRGDTCQ) is the EGF-like 1 domain. Positions 130–132 (RGD) match the Cell attachment site motif. Residues 137 to 177 (DVDECSARRGGCPQRCVNTAGSYWCQCWEGHSLSADGTLCV) enclose the EGF-like 2; calcium-binding domain. A coiled-coil region spans residues 192–219 (VDSAMKEEVQRLQSRVDLLEEKLQLVLA).

In terms of assembly, interacts with ITGAV/ITGB3 in an RGD-dependent manner, increasing endothelial cell's motility.

It is found in the secreted. It localises to the extracellular space. Functionally, regulates vascular tubulogenesis in vivo. Inhibits platelet-derived growth factor (PDGF)-BB-induced smooth muscle cell migration and promotes endothelial cell adhesion to the extracellular matrix and angiogenesis. The sequence is that of Epidermal growth factor-like protein 7 (EGFL7) from Homo sapiens (Human).